A 129-amino-acid chain; its full sequence is Glycine cleavage system H protein (129 aa).

The Lipoyl-binding domain occupies Thr23–Lys104. The residue at position 64 (Lys64) is an N6-lipoyllysine.

This sequence belongs to the GcvH family. In terms of assembly, the glycine cleavage system is composed of four proteins: P, T, L and H. (R)-lipoate serves as cofactor.

In terms of biological role, the glycine cleavage system catalyzes the degradation of glycine. The H protein shuttles the methylamine group of glycine from the P protein to the T protein. This Nitrosomonas eutropha (strain DSM 101675 / C91 / Nm57) protein is Glycine cleavage system H protein.